The sequence spans 435 residues: MSIITDVYAREVLDSRGNPTLEVEVYTESGAFGRGMVPSGASTGEHEAVELRDGDKSRYLGLGTQKAVDNVNNIIAKAIIGYDVRDQQAIDRAMIALDGTPNKGKLGANAILGVSIAVARAAADYLEVPLYTYLGGFNTKVLPTPMMNIINGGSHSDAPIAFQEFMIMPVGAPTFKEGLRWGAEVFHALKKILKERGLVTAVGDEGGFAPKFEGTEDGVETILKAIEAAGYEAGENGIMIGFDCASSEFYDKERKVYDYTKFEGEGAAVRTSAEQVDYLEELVNKYPIITIEDGMDENDWDGWKVLTERLGKRVQLVGDDFFVTNTEYLARGIKENAANSILIKVNQIGTLTETFEAIEMAKEAGYTAVVSHRSGETEDSTIADIAVATNAGQIKTGSLSRTDRIAKYNQLLRIEDQLGEVAQYKGIKSFYNLKK.

Residue Gln163 participates in (2R)-2-phosphoglycerate binding. Glu205 acts as the Proton donor in catalysis. Residues Asp243, Glu292, and Asp319 each contribute to the Mg(2+) site. Residues Lys344, Arg373, Ser374, and Lys395 each coordinate (2R)-2-phosphoglycerate. The active-site Proton acceptor is the Lys344.

Belongs to the enolase family. As to quaternary structure, homooctamer, a tetramer of homodimers. Mg(2+) is required as a cofactor.

The protein localises to the cytoplasm. It is found in the secreted. Its subcellular location is the cell surface. It localises to the cell wall. It carries out the reaction (2R)-2-phosphoglycerate = phosphoenolpyruvate + H2O. The protein operates within carbohydrate degradation; glycolysis; pyruvate from D-glyceraldehyde 3-phosphate: step 4/5. Functionally, catalyzes the reversible conversion of 2-phosphoglycerate (2-PG) into phosphoenolpyruvate (PEP). It is essential for the degradation of carbohydrates via glycolysis. 'Moonlights' as a plasminogen receptor. Binds plasminogen and more weakly plasmin when expressed on the bacterial cell surface; probably has more than one plasmin(ogen) binding site, may bind via Lys residues. Plasminogen binding potentially allows the bacterium to acquire surface-associated proteolytic activity, which in turn contributes to tissue invasion and virulence. The polypeptide is Enolase (Streptococcus pyogenes serotype M6 (strain ATCC BAA-946 / MGAS10394)).